We begin with the raw amino-acid sequence, 567 residues long: Phosphoglucomutase-like protein 5 (567 aa).

A disordered region spans residues 1 to 26 (MEGSPIPVLTVPTAPYEDQRPTGGGG). Phosphothreonine is present on T120. The residue at position 122 (S122) is a Phosphoserine.

It belongs to the phosphohexose mutase family. Interacts with DMD/dystrophin; the interaction is direct. Interacts with UTRN/utrophin.

Its subcellular location is the cell junction. It is found in the adherens junction. It localises to the cytoplasm. The protein localises to the cytoskeleton. The protein resides in the cell membrane. Its subcellular location is the sarcolemma. Its function is as follows. Component of adherens-type cell-cell and cell-matrix junctions. Has no phosphoglucomutase activity in vitro. This chain is Phosphoglucomutase-like protein 5, found in Mus musculus (Mouse).